The primary structure comprises 552 residues: Sensor histidine kinase DpiB (552 aa).

Over 1–21 (MLQLNENKQFAFFQRLAFPLR) the chain is Cytoplasmic. Residues 22 to 42 (IFLLILVFSIFVIAALAQYFT) traverse the membrane as a helical segment. Topologically, residues 43-182 (ASFEDYLTLH…DSWRAEFLLP (140 aa)) are periplasmic. Residues 183–203 (MAGVFVVLLGILMLLSWFLAA) traverse the membrane as a helical segment. The Cytoplasmic portion of the chain corresponds to 204 to 552 (HIRRQMMGME…NDSSINPIDR (349 aa)). Residues 222–292 (RQQEALFSSV…IDEKRQDVVA (71 aa)) enclose the PAS domain. A Histidine kinase domain is found at 344–541 (TLRHEHLNWM…LFSIYIPKVK (198 aa)). Position 347 is a phosphohistidine; by autocatalysis (H347).

In terms of processing, autophosphorylated.

The protein resides in the cell inner membrane. The catalysed reaction is ATP + protein L-histidine = ADP + protein N-phospho-L-histidine.. With respect to regulation, autophosphorylation is induced in vitro by dithiothreitol (DTT). Its function is as follows. Member of the two-component regulatory system DpiA/DpiB, which is essential for expression of citrate-specific fermentation genes and genes involved in plasmid inheritance. Could be involved in response to both the presence of citrate and external redox conditions. Functions as a sensor kinase that phosphorylates DpiA in the presence of citrate. This is Sensor histidine kinase DpiB (dpiB) from Escherichia coli (strain K12).